Consider the following 404-residue polypeptide: NADH-quinone oxidoreductase subunit D 2 (404 aa).

This sequence belongs to the complex I 49 kDa subunit family. NDH-1 is composed of 14 different subunits. Subunits NuoB, C, D, E, F, and G constitute the peripheral sector of the complex.

The protein localises to the cell inner membrane. It catalyses the reaction a quinone + NADH + 5 H(+)(in) = a quinol + NAD(+) + 4 H(+)(out). Its function is as follows. NDH-1 shuttles electrons from NADH, via FMN and iron-sulfur (Fe-S) centers, to quinones in the respiratory chain. The immediate electron acceptor for the enzyme in this species is believed to be ubiquinone. Couples the redox reaction to proton translocation (for every two electrons transferred, four hydrogen ions are translocated across the cytoplasmic membrane), and thus conserves the redox energy in a proton gradient. The sequence is that of NADH-quinone oxidoreductase subunit D 2 from Rhizobium etli (strain ATCC 51251 / DSM 11541 / JCM 21823 / NBRC 15573 / CFN 42).